The chain runs to 129 residues: Virion-associated protein (129 aa).

2 coiled-coil regions span residues 1–31 (MANL…ILEL) and 38–59 (TKES…LIND). The segment at 122-129 (PAGWPNQF) is capsid binding.

It belongs to the caulimovirus ORF III family. Homotetramer, through coiled-coil domain. Homotrimer when interacts with icosehadral capsid. Interacts with capsid protein, and with Movement protein.

It is found in the virion. Its subcellular location is the host cell junction. The protein resides in the host plasmodesma. Plays a role in virus cell-to-cell and plant-to-plant transmission. Interacts with virion icosahedral capsid and movement protein, thereby facilitating virion cell-to-cell transmission through plasmodesmata opened by viral movement protein. Also interacts with aphid transmission factor, attaching the virion to aphid stylet when the animal feeds on an virus infected plant. Aphid saliva may later detach the virion, inducing release of infectious particles when the animal feeds on a new plant. The protein is Virion-associated protein of Arabidopsis thaliana (Mouse-ear cress).